Consider the following 412-residue polypeptide: GTPase Obg (412 aa).

Residues 1 to 159 (MKFLDQAKIF…RWIWLRLKMI (159 aa)) form the Obg domain. Positions 160-327 (ADAGLVGLPN…ILARLFTHIR (168 aa)) constitute an OBG-type G domain. GTP-binding positions include 166 to 173 (GLPNAGKS), 191 to 195 (FTTLH), 212 to 215 (DIPG), 279 to 282 (NKCD), and 308 to 310 (SGV). Residues Ser173 and Thr193 each contribute to the Mg(2+) site. A disordered region spans residues 335-412 (AVPAASPIFG…ADDEEDDAEE (78 aa)). A compositionally biased stretch (acidic residues) spans 385-412 (NDGDEVDEDYDDEDLEEVADDEEDDAEE).

The protein belongs to the TRAFAC class OBG-HflX-like GTPase superfamily. OBG GTPase family. As to quaternary structure, monomer. Mg(2+) serves as cofactor.

It localises to the cytoplasm. In terms of biological role, an essential GTPase which binds GTP, GDP and possibly (p)ppGpp with moderate affinity, with high nucleotide exchange rates and a fairly low GTP hydrolysis rate. Plays a role in control of the cell cycle, stress response, ribosome biogenesis and in those bacteria that undergo differentiation, in morphogenesis control. The protein is GTPase Obg of Paramagnetospirillum magneticum (strain ATCC 700264 / AMB-1) (Magnetospirillum magneticum).